The primary structure comprises 397 residues: 8-amino-7-oxononanoate synthase (397 aa).

R21 contributes to the substrate binding site. A pyridoxal 5'-phosphate-binding site is contributed by 110–111; that stretch reads GY. H135 provides a ligand contact to substrate. The pyridoxal 5'-phosphate site is built by S181, H209, and T238. N6-(pyridoxal phosphate)lysine is present on K241. T355 contacts substrate.

The protein belongs to the class-II pyridoxal-phosphate-dependent aminotransferase family. BioF subfamily. As to quaternary structure, homodimer. Pyridoxal 5'-phosphate serves as cofactor.

The enzyme catalyses 6-carboxyhexanoyl-[ACP] + L-alanine + H(+) = (8S)-8-amino-7-oxononanoate + holo-[ACP] + CO2. It functions in the pathway cofactor biosynthesis; biotin biosynthesis. Its function is as follows. Catalyzes the decarboxylative condensation of pimeloyl-[acyl-carrier protein] and L-alanine to produce 8-amino-7-oxononanoate (AON), [acyl-carrier protein], and carbon dioxide. The polypeptide is 8-amino-7-oxononanoate synthase (Saccharophagus degradans (strain 2-40 / ATCC 43961 / DSM 17024)).